Here is a 260-residue protein sequence, read N- to C-terminus: Small ribosomal subunit protein uS2 (260 aa).

The protein belongs to the universal ribosomal protein uS2 family.

This chain is Small ribosomal subunit protein uS2, found in Streptococcus gordonii (strain Challis / ATCC 35105 / BCRC 15272 / CH1 / DL1 / V288).